We begin with the raw amino-acid sequence, 412 residues long: Peptidase T (412 aa).

His-84 is a Zn(2+) binding site. Asp-86 is an active-site residue. Zn(2+) is bound at residue Asp-146. Glu-179 serves as the catalytic Proton acceptor. Residues Glu-180, Asp-202, and His-385 each coordinate Zn(2+).

This sequence belongs to the peptidase M20B family. The cofactor is Zn(2+).

It localises to the cytoplasm. The catalysed reaction is Release of the N-terminal residue from a tripeptide.. Functionally, cleaves the N-terminal amino acid of tripeptides. The protein is Peptidase T of Haemophilus influenzae (strain 86-028NP).